Consider the following 326-residue polypeptide: MAFTPFPPRQPTASARLPLTLITLDDWALATITGADSEKYMQGQVTADVSQMTEDQHLLAAHCDAKGKMWSNLRLFRDGDGFAWIERRSVREPQLTELKKYAVFSKVTIAPDDERVLLGVAGFQARAALANLFSELPSKEKQVVKEGATTLLWFEHPAERFLIVTDEATANMLTDKLRGEAELNNSQQWLALNIEAGFPVIDAANSGQFIPQATNLQALGGISFKKGCYTGQEMVARAKFRGANKRALWLLTGSASRLPEAGEDLELKMGENWRRTGTVLAAVKLEDGQVVVQVVMNNDMEPDSIFRVRDDANTLHIEPLPYSLEE.

Residues Trp27 and Trp189 each coordinate folate.

Belongs to the tRNA-modifying YgfZ family.

The protein resides in the cytoplasm. In terms of biological role, folate-binding protein involved in regulating the level of ATP-DnaA and in the modification of some tRNAs. It is probably a key factor in regulatory networks that act via tRNA modification, such as initiation of chromosomal replication. This chain is tRNA-modifying protein YgfZ, found in Escherichia coli O17:K52:H18 (strain UMN026 / ExPEC).